Here is a 478-residue protein sequence, read N- to C-terminus: Aspartyl/glutamyl-tRNA(Asn/Gln) amidotransferase subunit B 1 (478 aa).

The protein belongs to the GatB/GatE family. GatB subfamily. As to quaternary structure, heterotrimer of A, B and C subunits.

It carries out the reaction L-glutamyl-tRNA(Gln) + L-glutamine + ATP + H2O = L-glutaminyl-tRNA(Gln) + L-glutamate + ADP + phosphate + H(+). It catalyses the reaction L-aspartyl-tRNA(Asn) + L-glutamine + ATP + H2O = L-asparaginyl-tRNA(Asn) + L-glutamate + ADP + phosphate + 2 H(+). Its function is as follows. Allows the formation of correctly charged Asn-tRNA(Asn) or Gln-tRNA(Gln) through the transamidation of misacylated Asp-tRNA(Asn) or Glu-tRNA(Gln) in organisms which lack either or both of asparaginyl-tRNA or glutaminyl-tRNA synthetases. The reaction takes place in the presence of glutamine and ATP through an activated phospho-Asp-tRNA(Asn) or phospho-Glu-tRNA(Gln). The protein is Aspartyl/glutamyl-tRNA(Asn/Gln) amidotransferase subunit B 1 of Syntrophus aciditrophicus (strain SB).